We begin with the raw amino-acid sequence, 681 residues long: Sodium-dependent phosphate transporter 1 (681 aa).

The next 6 helical transmembrane spans lie at 25–45 (NLWMLILGFIIAFVLAFSVGA), 66–86 (ACILASIFETVGSALLGAKVS), 106–126 (LMAGSVSAMFGSAVWQLVASF), 162–182 (IVMSWFVSPLLSGIMSGILFF), 201–221 (ALPIFYACTIGINLFSIMYTG), and 234–254 (GTILISVGCAVFCALIVWFFV). A disordered region spans residues 266 to 295 (VKSSPSESPLMEKKSNLKEDHEETKMAPGD). Ser-269 and Ser-273 each carry phosphoserine. Basic and acidic residues predominate over residues 275 to 295 (LMEKKSNLKEDHEETKMAPGD). A helical membrane pass occupies residues 514–534 (VSLLFQFLQILTACFGSFAHG). The tract at residues 553–560 (KQEASTKA) is a. 3 consecutive transmembrane segments (helical) span residues 561–581 (ATPIWLLLYGGVGICMGLWVW), 602–622 (FSIELASALTVVIASNIGLPI), and 652–672 (IFMAWFVTVPISGVISAAIMA).

It belongs to the inorganic phosphate transporter (PiT) (TC 2.A.20) family. In terms of tissue distribution, ubiquitously expressed.

The protein localises to the cell membrane. It catalyses the reaction 2 Na(+)(out) + phosphate(out) = 2 Na(+)(in) + phosphate(in). Functionally, sodium-phosphate symporter which preferentially transports the monovalent form of phosphate with a stoichiometry of two sodium ions per phosphate ion. May play a role in extracellular matrix and cartilage calcification as well as in vascular calcification. Essential for cell proliferation but this function is independent of its phosphate transporter activity. (Microbial infection) May function as a retroviral receptor but do not confer infection susceptibility to Gibbon Ape Leukemia Virus (GaLV), Simian sarcoma-associated virus (SSAV) and Feline leukemia virus subgroup B (FeLV-B). This Mus musculus (Mouse) protein is Sodium-dependent phosphate transporter 1 (Slc20a1).